A 637-amino-acid chain; its full sequence is 1-deoxy-D-xylulose-5-phosphate synthase (637 aa).

Thiamine diphosphate contacts are provided by residues histidine 73 and 113–115 (SHA). Aspartate 145 provides a ligand contact to Mg(2+). Residues 146-147 (GA), asparagine 175, tyrosine 286, and glutamate 367 contribute to the thiamine diphosphate site. Residue asparagine 175 participates in Mg(2+) binding.

Belongs to the transketolase family. DXPS subfamily. As to quaternary structure, homodimer. Mg(2+) is required as a cofactor. It depends on thiamine diphosphate as a cofactor.

It carries out the reaction D-glyceraldehyde 3-phosphate + pyruvate + H(+) = 1-deoxy-D-xylulose 5-phosphate + CO2. It participates in metabolic intermediate biosynthesis; 1-deoxy-D-xylulose 5-phosphate biosynthesis; 1-deoxy-D-xylulose 5-phosphate from D-glyceraldehyde 3-phosphate and pyruvate: step 1/1. Functionally, catalyzes the acyloin condensation reaction between C atoms 2 and 3 of pyruvate and glyceraldehyde 3-phosphate to yield 1-deoxy-D-xylulose-5-phosphate (DXP). In Thermobifida fusca (strain YX), this protein is 1-deoxy-D-xylulose-5-phosphate synthase.